Here is a 61-residue protein sequence, read N- to C-terminus: Large ribosomal subunit protein bL28A (61 aa).

The protein belongs to the bacterial ribosomal protein bL28 family.

The protein is Large ribosomal subunit protein bL28A (rpmB1) of Streptomyces coelicolor (strain ATCC BAA-471 / A3(2) / M145).